We begin with the raw amino-acid sequence, 330 residues long: Ketol-acid reductoisomerase (NADP(+)) (330 aa).

Positions 1–181 constitute a KARI N-terminal Rossmann domain; it reads MKVFYDSDFK…GLSRAGVIQT (181 aa). NADP(+)-binding positions include 24–27, Arg-47, Ser-52, and 82–85; these read YGSQ and DELQ. His-107 is an active-site residue. Gly-133 contributes to the NADP(+) binding site. The 146-residue stretch at 182–327 folds into the KARI C-terminal knotted domain; it reads TFKEETETDL…AKLRKMCGLE (146 aa). Positions 190, 194, 226, and 230 each coordinate Mg(2+). Ser-251 contributes to the substrate binding site.

Belongs to the ketol-acid reductoisomerase family. It depends on Mg(2+) as a cofactor.

The enzyme catalyses (2R)-2,3-dihydroxy-3-methylbutanoate + NADP(+) = (2S)-2-acetolactate + NADPH + H(+). It catalyses the reaction (2R,3R)-2,3-dihydroxy-3-methylpentanoate + NADP(+) = (S)-2-ethyl-2-hydroxy-3-oxobutanoate + NADPH + H(+). It functions in the pathway amino-acid biosynthesis; L-isoleucine biosynthesis; L-isoleucine from 2-oxobutanoate: step 2/4. Its pathway is amino-acid biosynthesis; L-valine biosynthesis; L-valine from pyruvate: step 2/4. Its function is as follows. Involved in the biosynthesis of branched-chain amino acids (BCAA). Catalyzes an alkyl-migration followed by a ketol-acid reduction of (S)-2-acetolactate (S2AL) to yield (R)-2,3-dihydroxy-isovalerate. In the isomerase reaction, S2AL is rearranged via a Mg-dependent methyl migration to produce 3-hydroxy-3-methyl-2-ketobutyrate (HMKB). In the reductase reaction, this 2-ketoacid undergoes a metal-dependent reduction by NADPH to yield (R)-2,3-dihydroxy-isovalerate. This is Ketol-acid reductoisomerase (NADP(+)) from Methanococcus maripaludis (strain DSM 14266 / JCM 13030 / NBRC 101832 / S2 / LL).